Consider the following 499-residue polypeptide: CD-NTase-associated protein 4 (499 aa).

Residues 1 to 226 are N-terminal endonuclease domain; sequence MATSVLANWH…DFRFDGAARA (226 aa). Active-site residues include Asp-49 and Gln-72. Asp-49 lines the Mg(2+) pocket. Position 73 (Ile-73) interacts with Mg(2+). The active site involves Lys-74. The segment at 258–464 is C-terminal SAVED domain; it reads FRNVALRSFS…HIFSAAPNAV (207 aa).

The protein belongs to the Cap4 nuclease family. As to quaternary structure, a monomer in the absence of ligand, in its presence it forms oligomers. It depends on Mg(2+) as a cofactor.

DNase activity is activated upon ligand binding (cAAG). Inhibited by EDTA. Its function is as follows. Effector DNase of a CBASS antivirus system. CBASS (cyclic oligonucleotide-based antiphage signaling system) provides immunity against bacteriophages. The CD-NTase protein (CdnD) synthesizes cyclic nucleotides in response to infection; these serve as specific second messenger signals. The signals activate a diverse range of effectors, leading to bacterial cell death and thus abortive phage infection. A type II-C(AAG) CBASS system. Functionally, binds second messenger 3',3',3'-cyclic AMP-AMP-GMP (cAAG). In the presence of cAAG (synthesized by the cognate CD-NTase protein in the CBASS operon), endonucleolytically degrades dsDNA to approximately 17 bp length fragments, with a preference for 5'-C|NG sites. Only binds DNA in the presence of cAAG. Not activated by c-di-AMP, c-di-GMP, 3',3'-cyclic GMP-AMP (cGAMP) or the second messenger of A.baumanii strain ATCC 27244. In terms of biological role, protects E.coli against phage T2 infection. When the cdnD-cap2-cap3-cap4 operon is introduced in E.coli there is a more than 10(3) decrease in the efficiency of T2 plaque formation. The operon does not protect against phage T5 and only about 10-fold against T7. Expression of cdnD-cap4 alone protects E.coli against phage T2 infection. The protein is CD-NTase-associated protein 4 of Enterobacter hormaechei subsp. hoffmannii (strain UCI 50).